Here is an 86-residue protein sequence, read N- to C-terminus: Small ribosomal subunit protein uS17 (86 aa).

The protein belongs to the universal ribosomal protein uS17 family. In terms of assembly, part of the 30S ribosomal subunit.

Functionally, one of the primary rRNA binding proteins, it binds specifically to the 5'-end of 16S ribosomal RNA. This is Small ribosomal subunit protein uS17 from Helicobacter pylori (strain P12).